The primary structure comprises 221 residues: Protein-L-isoaspartate O-methyltransferase (221 aa).

The active site involves Ser-64.

Belongs to the methyltransferase superfamily. L-isoaspartyl/D-aspartyl protein methyltransferase family.

It localises to the cytoplasm. It carries out the reaction [protein]-L-isoaspartate + S-adenosyl-L-methionine = [protein]-L-isoaspartate alpha-methyl ester + S-adenosyl-L-homocysteine. Its function is as follows. Catalyzes the methyl esterification of L-isoaspartyl residues in peptides and proteins that result from spontaneous decomposition of normal L-aspartyl and L-asparaginyl residues. It plays a role in the repair and/or degradation of damaged proteins. The polypeptide is Protein-L-isoaspartate O-methyltransferase (Thermococcus sibiricus (strain DSM 12597 / MM 739)).